Here is a 356-residue protein sequence, read N- to C-terminus: Cyanide hydratase (356 aa).

In terms of domain architecture, CN hydrolase spans 8–287 (YKAAAVNAEP…EGLLFVDIDL (280 aa)). The active-site Proton acceptor is the Glu48. Residue Lys130 is part of the active site. The active-site Nucleophile is Cys165.

It belongs to the carbon-nitrogen hydrolase superfamily. Nitrilase family. Oligomer of dimers, forming left-handed helical fibers.

The catalysed reaction is formamide = hydrogen cyanide + H2O. Catalyzes the hydration of cyanide to formamide. Degradation of cyanide may be important for plant pathogenic fungi in infection of cyanogenic plants. Can also transform some nitriles like 2-cyanopyridine and fumaronitrile. The sequence is that of Cyanide hydratase from Aspergillus niger.